We begin with the raw amino-acid sequence, 268 residues long: 4-hydroxy-tetrahydrodipicolinate reductase (268 aa).

7–12 serves as a coordination point for NAD(+); sequence GANGRM. Residue arginine 34 coordinates NADP(+). NAD(+) is bound by residues 97-99 and 121-124; these read GTT and SENM. The active-site Proton donor/acceptor is histidine 155. (S)-2,3,4,5-tetrahydrodipicolinate is bound at residue histidine 156. Catalysis depends on lysine 159, which acts as the Proton donor. (S)-2,3,4,5-tetrahydrodipicolinate is bound at residue 165 to 166; the sequence is GT.

This sequence belongs to the DapB family.

The protein resides in the cytoplasm. It catalyses the reaction (S)-2,3,4,5-tetrahydrodipicolinate + NAD(+) + H2O = (2S,4S)-4-hydroxy-2,3,4,5-tetrahydrodipicolinate + NADH + H(+). The enzyme catalyses (S)-2,3,4,5-tetrahydrodipicolinate + NADP(+) + H2O = (2S,4S)-4-hydroxy-2,3,4,5-tetrahydrodipicolinate + NADPH + H(+). The protein operates within amino-acid biosynthesis; L-lysine biosynthesis via DAP pathway; (S)-tetrahydrodipicolinate from L-aspartate: step 4/4. Functionally, catalyzes the conversion of 4-hydroxy-tetrahydrodipicolinate (HTPA) to tetrahydrodipicolinate. The polypeptide is 4-hydroxy-tetrahydrodipicolinate reductase (Bartonella bacilliformis (strain ATCC 35685 / KC583 / Herrer 020/F12,63)).